Here is a 1770-residue protein sequence, read N- to C-terminus: Transposon Ty2-DR2 Gag-Pol polyprotein (1770 aa).

Polar residues-rich tracts occupy residues 1–39 and 49–60; these read MESQ…SASN and KVNSQEETTPGT. 2 disordered regions span residues 1 to 89 and 360 to 449; these read MESQ…QQHG and HSEY…SNDE. Residues 295 to 397 form an RNA-binding region; the sequence is ENNINVSDRL…SSKPRAAKAH (103 aa). A compositionally biased stretch (low complexity) spans 369-381; sequence TSPNTTNTKVTTR. Polar residues-rich tracts occupy residues 399–408 and 415–435; these read IATSSKFSRV and ESTV…GQQQ. Catalysis depends on Asp-457, which acts as the For protease activity; shared with dimeric partner. The integrase-type zinc finger-like stretch occupies residues 579–636; sequence NVNKSKSVNKYPYPLIHRMLGHANFRSIQKSLKKNAVTYLKESDIEWSNASTYQCPDC. In terms of domain architecture, Integrase catalytic spans 656–831; that stretch reads ESYEPFQYLH…AGLDITTILP (176 aa). 2 residues coordinate Mg(2+): Asp-667 and Asp-732. 3 disordered regions span residues 1005 to 1038, 1059 to 1135, and 1171 to 1222; these read GGTI…MIDL, TEEP…KSSK, and SRQT…LEPP. Composition is skewed to polar residues over residues 1009-1024 and 1065-1082; these read ESDT…FTAR and QRNS…STPS. The Bipartite nuclear localization signal signature appears at 1193-1227; it reads KKRSLEDNETEIEVSRDTWNNKNMRSLEPPRSKKR. Residues 1353-1491 enclose the Reverse transcriptase Ty1/copia-type domain; that stretch reads NDYYITQLDI…DILGLEIKYQ (139 aa). Mg(2+) contacts are provided by Asp-1361, Asp-1442, Asp-1443, Asp-1625, Glu-1667, and Asp-1700. Positions 1625–1767 constitute an RNase H Ty1/copia-type domain; sequence DASYGNQPYY…IKTFKLLTNK (143 aa).

The capsid protein forms a homotrimer, from which the VLPs are assembled. The protease is a homodimer, whose active site consists of two apposed aspartic acid residues. In terms of processing, initially, virus-like particles (VLPs) are composed of the structural unprocessed proteins Gag and Gag-Pol, and also contain the host initiator methionine tRNA (tRNA(i)-Met) which serves as a primer for minus-strand DNA synthesis, and a dimer of genomic Ty RNA. Processing of the polyproteins occurs within the particle and proceeds by an ordered pathway, called maturation. First, the protease (PR) is released by autocatalytic cleavage of the Gag-Pol polyprotein, and this cleavage is a prerequisite for subsequent processing at the remaining sites to release the mature structural and catalytic proteins. Maturation takes place prior to the RT reaction and is required to produce transposition-competent VLPs.

The protein resides in the cytoplasm. Its subcellular location is the nucleus. It catalyses the reaction DNA(n) + a 2'-deoxyribonucleoside 5'-triphosphate = DNA(n+1) + diphosphate. It carries out the reaction Endonucleolytic cleavage to 5'-phosphomonoester.. Functionally, capsid protein (CA) is the structural component of the virus-like particle (VLP), forming the shell that encapsulates the retrotransposons dimeric RNA genome. The particles are assembled from trimer-clustered units and there are holes in the capsid shells that allow for the diffusion of macromolecules. CA also has nucleocapsid-like chaperone activity, promoting primer tRNA(i)-Met annealing to the multipartite primer-binding site (PBS), dimerization of Ty2 RNA and initiation of reverse transcription. In terms of biological role, the aspartyl protease (PR) mediates the proteolytic cleavages of the Gag and Gag-Pol polyproteins after assembly of the VLP. Its function is as follows. Reverse transcriptase/ribonuclease H (RT) is a multifunctional enzyme that catalyzes the conversion of the retro-elements RNA genome into dsDNA within the VLP. The enzyme displays a DNA polymerase activity that can copy either DNA or RNA templates, and a ribonuclease H (RNase H) activity that cleaves the RNA strand of RNA-DNA heteroduplexes during plus-strand synthesis and hydrolyzes RNA primers. The conversion leads to a linear dsDNA copy of the retrotransposon that includes long terminal repeats (LTRs) at both ends. Integrase (IN) targets the VLP to the nucleus, where a subparticle preintegration complex (PIC) containing at least integrase and the newly synthesized dsDNA copy of the retrotransposon must transit the nuclear membrane. Once in the nucleus, integrase performs the integration of the dsDNA into the host genome. The polypeptide is Transposon Ty2-DR2 Gag-Pol polyprotein (TY2B-DR2) (Saccharomyces cerevisiae (strain ATCC 204508 / S288c) (Baker's yeast)).